The sequence spans 170 residues: Large ribosomal subunit protein uL10 (170 aa).

Belongs to the universal ribosomal protein uL10 family. As to quaternary structure, part of the ribosomal stalk of the 50S ribosomal subunit. The N-terminus interacts with L11 and the large rRNA to form the base of the stalk. The C-terminus forms an elongated spine to which L12 dimers bind in a sequential fashion forming a multimeric L10(L12)X complex.

Functionally, forms part of the ribosomal stalk, playing a central role in the interaction of the ribosome with GTP-bound translation factors. The sequence is that of Large ribosomal subunit protein uL10 from Jannaschia sp. (strain CCS1).